A 434-amino-acid chain; its full sequence is Methylenetetrahydrofolate--tRNA-(uracil-5-)-methyltransferase TrmFO (434 aa).

An FAD-binding site is contributed by 10 to 15 (GAGLAG).

It belongs to the MnmG family. TrmFO subfamily. It depends on FAD as a cofactor.

It is found in the cytoplasm. The enzyme catalyses uridine(54) in tRNA + (6R)-5,10-methylene-5,6,7,8-tetrahydrofolate + NADH + H(+) = 5-methyluridine(54) in tRNA + (6S)-5,6,7,8-tetrahydrofolate + NAD(+). It catalyses the reaction uridine(54) in tRNA + (6R)-5,10-methylene-5,6,7,8-tetrahydrofolate + NADPH + H(+) = 5-methyluridine(54) in tRNA + (6S)-5,6,7,8-tetrahydrofolate + NADP(+). Its function is as follows. Catalyzes the folate-dependent formation of 5-methyl-uridine at position 54 (M-5-U54) in all tRNAs. The sequence is that of Methylenetetrahydrofolate--tRNA-(uracil-5-)-methyltransferase TrmFO from Bacillus mycoides (strain KBAB4) (Bacillus weihenstephanensis).